The chain runs to 369 residues: Maltose/maltodextrin import ATP-binding protein MalK (369 aa).

The region spanning 4–234 (VTLRNVCKSY…PKNRFVAGFI (231 aa)) is the ABC transporter domain. 36–43 (GPSGCGKS) is a binding site for ATP.

The protein belongs to the ABC transporter superfamily. Maltooligosaccharide importer (TC 3.A.1.1.1) family. In terms of assembly, the complex is composed of two ATP-binding proteins (MalK), two transmembrane proteins (MalG and MalK) and a solute-binding protein (MalE).

The protein resides in the cell inner membrane. The enzyme catalyses D-maltose(out) + ATP + H2O = D-maltose(in) + ADP + phosphate + H(+). Functionally, part of the ABC transporter complex MalEFGK involved in maltose/maltodextrin import. Responsible for energy coupling to the transport system. This chain is Maltose/maltodextrin import ATP-binding protein MalK, found in Aliivibrio fischeri (strain ATCC 700601 / ES114) (Vibrio fischeri).